We begin with the raw amino-acid sequence, 255 residues long: MTIQLSVNVNKIAVLRNSRGGTDPDVLQAARTCIAAGAHGITVHPRPDQRHIRAGDVLALSALTREHAVEFNIEGNPFAPPRAGYPGLLELCRATRPEQITLVPDGDGQLTSDHGFDFAQDTTQLAELIAAFKAVGSRVSLFVDAGNPDIAGAAALGADRVELYTGPYAHAHASGQTDTALALFADAGRRASAAGLGINAGHDLSQANLGDFLAAVPGVLEVSIGHALISEALYQGLEATVRAYVDILRGSQVGA.

Asparagine 8 and arginine 19 together coordinate 3-amino-2-oxopropyl phosphate. Histidine 44 acts as the Proton acceptor in catalysis. 1-deoxy-D-xylulose 5-phosphate-binding residues include arginine 46 and histidine 51. The active-site Proton acceptor is glutamate 74. Threonine 111 provides a ligand contact to 1-deoxy-D-xylulose 5-phosphate. Histidine 202 functions as the Proton donor in the catalytic mechanism. 3-amino-2-oxopropyl phosphate contacts are provided by residues aspartate 203 and 225–226 (GH).

Belongs to the PNP synthase family. In terms of assembly, homooctamer; tetramer of dimers.

It localises to the cytoplasm. It carries out the reaction 3-amino-2-oxopropyl phosphate + 1-deoxy-D-xylulose 5-phosphate = pyridoxine 5'-phosphate + phosphate + 2 H2O + H(+). It functions in the pathway cofactor biosynthesis; pyridoxine 5'-phosphate biosynthesis; pyridoxine 5'-phosphate from D-erythrose 4-phosphate: step 5/5. Catalyzes the complicated ring closure reaction between the two acyclic compounds 1-deoxy-D-xylulose-5-phosphate (DXP) and 3-amino-2-oxopropyl phosphate (1-amino-acetone-3-phosphate or AAP) to form pyridoxine 5'-phosphate (PNP) and inorganic phosphate. The protein is Pyridoxine 5'-phosphate synthase of Xanthomonas oryzae pv. oryzae (strain MAFF 311018).